The chain runs to 431 residues: 5-methylthioadenosine/S-adenosylhomocysteine deaminase (431 aa).

His-63 and His-65 together coordinate Zn(2+). Substrate contacts are provided by Glu-92, Arg-144, and His-184. His-211 contributes to the Zn(2+) binding site. The substrate site is built by Glu-214 and Asp-299. Asp-299 contacts Zn(2+).

This sequence belongs to the metallo-dependent hydrolases superfamily. MTA/SAH deaminase family. The cofactor is Zn(2+).

It catalyses the reaction S-adenosyl-L-homocysteine + H2O + H(+) = S-inosyl-L-homocysteine + NH4(+). The catalysed reaction is S-methyl-5'-thioadenosine + H2O + H(+) = S-methyl-5'-thioinosine + NH4(+). Functionally, catalyzes the deamination of 5-methylthioadenosine and S-adenosyl-L-homocysteine into 5-methylthioinosine and S-inosyl-L-homocysteine, respectively. Is also able to deaminate adenosine. The sequence is that of 5-methylthioadenosine/S-adenosylhomocysteine deaminase from Thermoanaerobacter pseudethanolicus (strain ATCC 33223 / 39E) (Clostridium thermohydrosulfuricum).